We begin with the raw amino-acid sequence, 119 residues long: C-X-C motif chemokine 17 (119 aa).

A signal peptide spans 1 to 22 (MKLLASPFLLLLPVMLMSMVFS). Positions 75 to 100 (CPCDHVKGREKKNRHQKHHRKSQRPS) are disordered. Cystine bridges form between cysteine 75–cysteine 103 and cysteine 77–cysteine 110. Positions 82-98 (GREKKNRHQKHHRKSQR) are enriched in basic residues.

This sequence belongs to the intercrine alpha (chemokine CxC) family. Likely to undergo an endoproteolytic process to form a four-cysteine-containing mature peptide with a canonical CXC chemokine scaffold after secretion. As to expression, detected in lung, trachea, lung, tongue thyroid, submaxillary gland, epididymis, and uterus tissues and at a lower level in ovary, prostate and in intestinal tissues.

The protein localises to the secreted. In terms of biological role, chemokine that acts as a chemoattractant for monocytes, macrophages and dendritic cells. Plays a role in angiogenesis and possibly in the development of tumors. Acts as an anti-inflammatory in the stomach. May play a role in the innate defense against infections. Activates the C-X-C chemokine receptor GPR35 to induce a rapid and transient rise in the level of intracellular calcium ions. The chain is C-X-C motif chemokine 17 (Cxcl17) from Mus musculus (Mouse).